Reading from the N-terminus, the 351-residue chain is L-threonine 3-dehydrogenase (351 aa).

Cys39 serves as a coordination point for Zn(2+). Catalysis depends on charge relay system residues Thr41 and His44. Positions 64, 65, 94, 97, 100, and 108 each coordinate Zn(2+). NAD(+) is bound by residues Ile176, Asp196, Arg201, 271 to 273 (LGI), and 295 to 296 (IY).

It belongs to the zinc-containing alcohol dehydrogenase family. Homotetramer. It depends on Zn(2+) as a cofactor.

It localises to the cytoplasm. It catalyses the reaction L-threonine + NAD(+) = (2S)-2-amino-3-oxobutanoate + NADH + H(+). The protein operates within amino-acid degradation; L-threonine degradation via oxydo-reductase pathway; glycine from L-threonine: step 1/2. In terms of biological role, catalyzes the NAD(+)-dependent oxidation of L-threonine to 2-amino-3-ketobutyrate. This is L-threonine 3-dehydrogenase from Francisella tularensis subsp. novicida (strain U112).